Here is a 281-residue protein sequence, read N- to C-terminus: Undecaprenyl-diphosphatase 1 (281 aa).

Transmembrane regions (helical) follow at residues Trp95–Ile115, Phe119–Ala139, Leu152–Val172, Phe195–Ala215, Leu227–Leu247, and Phe256–Thr276.

Belongs to the UppP family.

Its subcellular location is the cell membrane. The enzyme catalyses di-trans,octa-cis-undecaprenyl diphosphate + H2O = di-trans,octa-cis-undecaprenyl phosphate + phosphate + H(+). Its function is as follows. Catalyzes the dephosphorylation of undecaprenyl diphosphate (UPP). Confers resistance to bacitracin. The protein is Undecaprenyl-diphosphatase 1 of Corynebacterium jeikeium (strain K411).